Here is a 201-residue protein sequence, read N- to C-terminus: MDLISQNHNNRNPNTSLSTQTPSSFSSPPSSSRYENQKRRDWNTFCQYLRNHHPPLSLASCSGAHVLDFLRYLDQFGKTKVHHQNCAFFGLPNPPAPCPCPLRQAWGSLDALIGRLRAAYEENGGAPETSPFGSRSVRIFLREVRDFQAKSRGVSYEKKRKRVNNKQITQSQPQSQPPLPQQPQQEQGQSMMANYHHGATQ.

Positions 1–14 are enriched in polar residues; that stretch reads MDLISQNHNNRNPN. Disordered regions lie at residues 1-37 and 151-201; these read MDLISQNHNNRNPNTSLSTQTPSSFSSPPSSSRYENQ and SRGV…GATQ. A compositionally biased stretch (low complexity) spans 15 to 32; sequence TSLSTQTPSSFSSPPSSS. Residues 33–160 enclose the ALOG domain; sequence RYENQKRRDW…SRGVSYEKKR (128 aa). A Nuclear localization signal motif is present at residues 158 to 162; it reads KKRKR.

The protein belongs to the plant homeotic and developmental regulators ALOG protein family.

Its subcellular location is the nucleus. Probable transcription regulator that acts as a developmental regulator by promoting cell growth in response to light. This chain is Protein LIGHT-DEPENDENT SHORT HYPOCOTYLS 2 (LSH2), found in Arabidopsis thaliana (Mouse-ear cress).